The primary structure comprises 279 residues: Threonylcarbamoyl-AMP synthase (279 aa).

The N-terminal 55 residues, 1–55, are a transit peptide targeting the mitochondrion; that stretch reads MSPARRCRGMRAAVAASVGLSEGPAGSRSGRLFRPPSPAPAAPGARLLRLPGSGA. The disordered stretch occupies residues 21 to 41; that stretch reads SEGPAGSRSGRLFRPPSPAPA. S60 carries the phosphoserine modification. In terms of domain architecture, YrdC-like spans 67–257; sequence TEALRAAVAE…KFGIIRPGCA (191 aa).

It belongs to the SUA5 family. As to quaternary structure, interacts with RSC1A1. In terms of tissue distribution, ubiquitously expressed.

Its subcellular location is the cytoplasm. The protein localises to the mitochondrion. It localises to the cell membrane. The enzyme catalyses L-threonine + hydrogencarbonate + ATP = L-threonylcarbamoyladenylate + diphosphate + H2O. In terms of biological role, cytoplasmic and mitochondrial threonylcarbamoyl-AMP synthase required for the formation of a threonylcarbamoyl group on adenosine at position 37 (t(6)A37) in tRNAs that read codons beginning with adenine. Catalyzes the conversion of L-threonine, HCO(3)(-)/CO(2) and ATP to give threonylcarbamoyl-AMP (TC-AMP) as the acyladenylate intermediate, with the release of diphosphate. Participates in t(6)A37 formation in cytoplasmic and mitochondrial tRNAs. May regulate the activity of some transporters. The polypeptide is Threonylcarbamoyl-AMP synthase (Homo sapiens (Human)).